The following is a 105-amino-acid chain: Pyrimidine/purine nucleoside phosphorylase (105 aa).

Belongs to the nucleoside phosphorylase PpnP family.

The enzyme catalyses a purine D-ribonucleoside + phosphate = a purine nucleobase + alpha-D-ribose 1-phosphate. It carries out the reaction adenosine + phosphate = alpha-D-ribose 1-phosphate + adenine. It catalyses the reaction cytidine + phosphate = cytosine + alpha-D-ribose 1-phosphate. The catalysed reaction is guanosine + phosphate = alpha-D-ribose 1-phosphate + guanine. The enzyme catalyses inosine + phosphate = alpha-D-ribose 1-phosphate + hypoxanthine. It carries out the reaction thymidine + phosphate = 2-deoxy-alpha-D-ribose 1-phosphate + thymine. It catalyses the reaction uridine + phosphate = alpha-D-ribose 1-phosphate + uracil. The catalysed reaction is xanthosine + phosphate = alpha-D-ribose 1-phosphate + xanthine. Functionally, catalyzes the phosphorolysis of diverse nucleosides, yielding D-ribose 1-phosphate and the respective free bases. Can use uridine, adenosine, guanosine, cytidine, thymidine, inosine and xanthosine as substrates. Also catalyzes the reverse reactions. This is Pyrimidine/purine nucleoside phosphorylase from Ralstonia nicotianae (strain ATCC BAA-1114 / GMI1000) (Ralstonia solanacearum).